The chain runs to 420 residues: FAD-dependent monooxygenase ntnJ (420 aa).

A helical transmembrane segment spans residues 12 to 31 (FRVIVVGAGIGGLSAAVALA). The FAD site is built by glutamate 41 and alanine 54. Asparagine 124 carries N-linked (GlcNAc...) asparagine glycosylation. Residue arginine 187 is part of the active site. Residue asparagine 264 is glycosylated (N-linked (GlcNAc...) asparagine). FAD-binding residues include aspartate 302 and valine 315.

Belongs to the paxM FAD-dependent monooxygenase family. The cofactor is FAD.

It localises to the membrane. It functions in the pathway secondary metabolite biosynthesis; terpenoid biosynthesis. FAD-dependent monooxygenase; part of the gene cluster that mediates the biosynthesis of the meroterpenoids nectripenoids A and B, as well as cochliquninone D and isocochliquninone E. The pathway probably begins with the HR-PKS ntnH that catalyzes two chain-extension steps to form a reduced triketide, which then primes the SAT domain in the NR-PKS ntnG to initiate three more cycles of extension to give a linear hexaketide corresponding to the polyketide part of nectripenoids. The FAD-dependent monooxygenase ntnJ then performs an oxidative decarboxylation at C11 of the ntnH/ntnG product, via an electrophilic aromatic hydroxylation with concomitant ipso-decarboxylation. The membrane-bound polyprenyl transferase ntnF then introduces a farnesyl group before the FAD-dependent monooxygenase ntnK functions as the first epoxidase on terminal C12'-C13' olefin, followed by a second epoxidation on C7'-C8' catalyzed by ntnA. The terpene cyclase/mutase ntnI then initiates the sequential tricyclic ring formation through protonation of the terminal epoxide and catalyzes the regioselective and stereoselective 6/6/6-tricyclic ring formation. The cytochrome P450 monooxygenase ntnM may then hydroxylate C1'. This chain is FAD-dependent monooxygenase ntnJ, found in Nectria sp.